We begin with the raw amino-acid sequence, 217 residues long: Regulator of G-protein signaling 19 (217 aa).

Residues 1 to 29 form a disordered region; that stretch reads MPTPHEAEKQITGPEEADRPPSMSSHDTA. Phosphoserine is present on residues S24 and S97. An RGS domain is found at 90–206; sequence SFDKLMHSPA…LSSPTYRALL (117 aa). A Phosphoserine; by MAPK1 and MAPK3 modification is found at S151. An interaction with GIPC region spans residues 207–217; that stretch reads LQGPSQSSSEA.

As to quaternary structure, interacts with GIPC PDZ domain. Interacts with GNAO1. Fatty acylated. Heavily palmitoylated in the cysteine string motif. Post-translationally, phosphorylated, mainly on serine residues. Highest expression in lung. Placenta, liver and heart also express high levels of GAIP.

The protein resides in the membrane. Functionally, inhibits signal transduction by increasing the GTPase activity of G protein alpha subunits thereby driving them into their inactive GDP-bound form. Binds to G-alpha subfamily 1 members, with the order G(i)a3 &gt; G(i)a1 &gt; G(o)a &gt;&gt; G(z)a/G(i)a2. Activity on G(z)-alpha is inhibited by phosphorylation and palmitoylation of the G-protein. The chain is Regulator of G-protein signaling 19 (RGS19) from Homo sapiens (Human).